Here is a 454-residue protein sequence, read N- to C-terminus: Probable ECA polymerase (454 aa).

11 consecutive transmembrane segments (helical) span residues 3 to 23 (LGQF…ILTL), 39 to 59 (FSML…MLVF), 61 to 81 (FGVA…ATAF), 119 to 139 (LALV…FLLF), 154 to 174 (GVAL…VYFL), 180 to 200 (AWFF…VIVG), 201 to 221 (GTRA…IVRG), 222 to 242 (WITL…MFWL), 340 to 360 (LVVM…GLII), 377 to 397 (YKAA…IVLA), and 409 to 429 (VFFC…YWLF).

Belongs to the WzyE family. As to quaternary structure, probably part of a complex composed of WzxE, WzyE and WzzE.

Its subcellular location is the cell inner membrane. It participates in bacterial outer membrane biogenesis; enterobacterial common antigen biosynthesis. Its function is as follows. Probably involved in the polymerization of enterobacterial common antigen (ECA) trisaccharide repeat units. The sequence is that of Probable ECA polymerase from Yersinia pseudotuberculosis serotype O:1b (strain IP 31758).